Reading from the N-terminus, the 371-residue chain is Aminomethyltransferase (371 aa).

It belongs to the GcvT family. The glycine cleavage system is composed of four proteins: P, T, L and H.

It carries out the reaction N(6)-[(R)-S(8)-aminomethyldihydrolipoyl]-L-lysyl-[protein] + (6S)-5,6,7,8-tetrahydrofolate = N(6)-[(R)-dihydrolipoyl]-L-lysyl-[protein] + (6R)-5,10-methylene-5,6,7,8-tetrahydrofolate + NH4(+). In terms of biological role, the glycine cleavage system catalyzes the degradation of glycine. In Pectobacterium carotovorum subsp. carotovorum (strain PC1), this protein is Aminomethyltransferase.